The chain runs to 259 residues: Phosphonates import ATP-binding protein PhnC (259 aa).

An ABC transporter domain is found at I4 to G245. G37–S44 serves as a coordination point for ATP.

Belongs to the ABC transporter superfamily. Phosphonates importer (TC 3.A.1.9.1) family. In terms of assembly, the complex is composed of two ATP-binding proteins (PhnC), two transmembrane proteins (PhnE) and a solute-binding protein (PhnD).

The protein localises to the cell inner membrane. It carries out the reaction phosphonate(out) + ATP + H2O = phosphonate(in) + ADP + phosphate + H(+). Functionally, part of the ABC transporter complex PhnCDE involved in phosphonates import. Responsible for energy coupling to the transport system. The chain is Phosphonates import ATP-binding protein PhnC from Thiobacillus denitrificans (strain ATCC 25259 / T1).